The following is a 91-amino-acid chain: Translation initiation factor IF-1 (91 aa).

Residues 1 to 72 (MAKEELLEFE…DRGRINFRHK (72 aa)) enclose the S1-like domain. The tract at residues 70 to 91 (RHKAEGNAPPPGARRQQNFRRR) is disordered.

This sequence belongs to the IF-1 family. As to quaternary structure, component of the 30S ribosomal translation pre-initiation complex which assembles on the 30S ribosome in the order IF-2 and IF-3, IF-1 and N-formylmethionyl-tRNA(fMet); mRNA recruitment can occur at any time during PIC assembly.

It localises to the cytoplasm. Its function is as follows. One of the essential components for the initiation of protein synthesis. Stabilizes the binding of IF-2 and IF-3 on the 30S subunit to which N-formylmethionyl-tRNA(fMet) subsequently binds. Helps modulate mRNA selection, yielding the 30S pre-initiation complex (PIC). Upon addition of the 50S ribosomal subunit IF-1, IF-2 and IF-3 are released leaving the mature 70S translation initiation complex. The chain is Translation initiation factor IF-1 from Azorhizobium caulinodans (strain ATCC 43989 / DSM 5975 / JCM 20966 / LMG 6465 / NBRC 14845 / NCIMB 13405 / ORS 571).